Here is a 305-residue protein sequence, read N- to C-terminus: Glycine--tRNA ligase alpha subunit (305 aa).

The protein belongs to the class-II aminoacyl-tRNA synthetase family. In terms of assembly, tetramer of two alpha and two beta subunits.

The protein localises to the cytoplasm. It catalyses the reaction tRNA(Gly) + glycine + ATP = glycyl-tRNA(Gly) + AMP + diphosphate. The polypeptide is Glycine--tRNA ligase alpha subunit (Streptococcus pyogenes serotype M18 (strain MGAS8232)).